Consider the following 341-residue polypeptide: S-adenosylmethionine:tRNA ribosyltransferase-isomerase (341 aa).

The protein belongs to the QueA family. In terms of assembly, monomer.

It is found in the cytoplasm. The enzyme catalyses 7-aminomethyl-7-carbaguanosine(34) in tRNA + S-adenosyl-L-methionine = epoxyqueuosine(34) in tRNA + adenine + L-methionine + 2 H(+). Its pathway is tRNA modification; tRNA-queuosine biosynthesis. In terms of biological role, transfers and isomerizes the ribose moiety from AdoMet to the 7-aminomethyl group of 7-deazaguanine (preQ1-tRNA) to give epoxyqueuosine (oQ-tRNA). The chain is S-adenosylmethionine:tRNA ribosyltransferase-isomerase from Chlorobium phaeovibrioides (strain DSM 265 / 1930) (Prosthecochloris vibrioformis (strain DSM 265)).